A 351-amino-acid chain; its full sequence is Formyl peptide receptor 2 (351 aa).

The Extracellular portion of the chain corresponds to 1-29 (MESNYSIHLNGSEVVVYDSTISRVLWILS). N-linked (GlcNAc...) asparagine glycosylation is found at Asn-4 and Asn-10. The chain crosses the membrane as a helical span at residues 30–50 (MVVVSITFFLGVLGNGLVIWV). Over 51-61 (AGFRMPHTVTT) the chain is Cytoplasmic. Residues 62-82 (IWYLNLALADFSFTATLPFLL) traverse the membrane as a helical segment. Topologically, residues 83-99 (VEMAMKEKWPFGWFLCK) are extracellular. Cys-98 and Cys-176 are disulfide-bonded. A helical transmembrane segment spans residues 100–120 (LVHIVVDVNLFGSVFLIALIA). Over 121–144 (LDRCICVLHPVWAQNHRTVSLARK) the chain is Cytoplasmic. A helical membrane pass occupies residues 145-165 (VVVGPWIFALILTLPIFIFLT). The Extracellular segment spans residues 166–205 (TVRIPGGDVYCTFNFGSWAQTDEEKLNTAITFVTTRGIIR). Residues 206–226 (FLIGFSMPMSIVAVCYGLIAV) traverse the membrane as a helical segment. The Cytoplasmic segment spans residues 227-241 (KINRRNLVNSSRPLR). Residues 242–262 (VLTAVVASFFICWFPFQLVAL) form a helical membrane-spanning segment. Residues 263 to 282 (LGTVWFKETLLSGSYKILDM) lie on the Extracellular side of the membrane. A helical membrane pass occupies residues 283–305 (FVNPTSSLAYFNSCLNPMLYVFM). The Cytoplasmic portion of the chain corresponds to 306 to 351 (GQDFRERFIHSLPYSLERALSEDSGQTSDSSTSSTSPPADIELKAP). Positions 325-351 (LSEDSGQTSDSSTSSTSPPADIELKAP) are disordered. Residues 327-341 (EDSGQTSDSSTSSTS) are compositionally biased toward low complexity.

Belongs to the G-protein coupled receptor 1 family. In terms of assembly, interacts with Amyloid-beta protein 42, product of APP; the interaction takes place at the cell surface and the complex is then rapidly internalized. In terms of tissue distribution, primarily expressed in neutrophils. Not detected in vomeronasal neurons.

It localises to the cell membrane. Functionally, high affinity receptor for N-formyl-methionyl peptides (FMLP), which are powerful neutrophil chemotactic factors. Stimulates chemotaxis in immune cells to site of infection or tissue damage upon recognition of several ligands, such as FMLP, or ligand involved in cell damage, disease or inflammation. Receptor for the chemokine-like protein FAM19A5, mediating FAM19A5-stimulated macrophage chemotaxis and the inhibitory effect on TNFSF11/RANKL-induced osteoclast differentiation. This is Formyl peptide receptor 2 (Fpr2) from Mus musculus (Mouse).